Consider the following 192-residue polypeptide: Peptidyl-tRNA hydrolase (192 aa).

Tyrosine 14 contacts tRNA. Histidine 19 acts as the Proton acceptor in catalysis. Residues tyrosine 64, asparagine 66, and asparagine 112 each coordinate tRNA.

The protein belongs to the PTH family. In terms of assembly, monomer.

It is found in the cytoplasm. It carries out the reaction an N-acyl-L-alpha-aminoacyl-tRNA + H2O = an N-acyl-L-amino acid + a tRNA + H(+). Hydrolyzes ribosome-free peptidyl-tRNAs (with 1 or more amino acids incorporated), which drop off the ribosome during protein synthesis, or as a result of ribosome stalling. Its function is as follows. Catalyzes the release of premature peptidyl moieties from peptidyl-tRNA molecules trapped in stalled 50S ribosomal subunits, and thus maintains levels of free tRNAs and 50S ribosomes. This chain is Peptidyl-tRNA hydrolase, found in Anaeromyxobacter sp. (strain K).